Here is a 500-residue protein sequence, read N- to C-terminus: ATP synthase subunit beta (500 aa).

Position 155–162 (155–162 (GGAGVGKT)) interacts with ATP.

The protein belongs to the ATPase alpha/beta chains family. F-type ATPases have 2 components, CF(1) - the catalytic core - and CF(0) - the membrane proton channel. CF(1) has five subunits: alpha(3), beta(3), gamma(1), delta(1), epsilon(1). CF(0) has three main subunits: a(1), b(2) and c(9-12). The alpha and beta chains form an alternating ring which encloses part of the gamma chain. CF(1) is attached to CF(0) by a central stalk formed by the gamma and epsilon chains, while a peripheral stalk is formed by the delta and b chains.

The protein resides in the cell inner membrane. It carries out the reaction ATP + H2O + 4 H(+)(in) = ADP + phosphate + 5 H(+)(out). Functionally, produces ATP from ADP in the presence of a proton gradient across the membrane. The catalytic sites are hosted primarily by the beta subunits. The polypeptide is ATP synthase subunit beta (Azobacteroides pseudotrichonymphae genomovar. CFP2).